We begin with the raw amino-acid sequence, 510 residues long: NAD(P)H-quinone oxidoreductase subunit 2 A, chloroplastic (510 aa).

13 consecutive transmembrane segments (helical) span residues 24–44, 57–77, 99–119, 124–144, 149–169, 183–203, 227–247, 295–315, 323–343, 354–374, 395–415, 418–438, and 484–504; these read LLLF…GLIL, IPWL…ALLF, IFQF…VEYI, MAIT…MFLC, LITI…LSGY, YLLM…WLYG, PGIS…LSLA, WHLL…LIAI, MLAY…IVGD, YMLF…SFGL, ALSL…AGFF, LHLF…IGLL, and MIVC…IIAI.

The protein belongs to the complex I subunit 2 family. NDH is composed of at least 16 different subunits, 5 of which are encoded in the nucleus.

The protein resides in the plastid. It is found in the chloroplast thylakoid membrane. It catalyses the reaction a plastoquinone + NADH + (n+1) H(+)(in) = a plastoquinol + NAD(+) + n H(+)(out). The catalysed reaction is a plastoquinone + NADPH + (n+1) H(+)(in) = a plastoquinol + NADP(+) + n H(+)(out). In terms of biological role, NDH shuttles electrons from NAD(P)H:plastoquinone, via FMN and iron-sulfur (Fe-S) centers, to quinones in the photosynthetic chain and possibly in a chloroplast respiratory chain. The immediate electron acceptor for the enzyme in this species is believed to be plastoquinone. Couples the redox reaction to proton translocation, and thus conserves the redox energy in a proton gradient. This chain is NAD(P)H-quinone oxidoreductase subunit 2 A, chloroplastic, found in Ranunculus macranthus (Large buttercup).